A 317-amino-acid polypeptide reads, in one-letter code: tRNA-dihydrouridine(20a/20b) synthase [NAD(P)+]-like (317 aa).

Residues Pro33–Val35 and Gln87 contribute to the FMN site. Catalysis depends on Cys116, which acts as the Proton donor. FMN is bound by residues Lys158, His186, Asn216 to Asp218, and Ala240 to Arg241.

Belongs to the Dus family. Dus4 subfamily. The cofactor is FMN.

It carries out the reaction 5,6-dihydrouridine(20a) in tRNA + NADP(+) = uridine(20a) in tRNA + NADPH + H(+). The catalysed reaction is 5,6-dihydrouridine(20a) in tRNA + NAD(+) = uridine(20a) in tRNA + NADH + H(+). It catalyses the reaction 5,6-dihydrouridine(20b) in tRNA + NAD(+) = uridine(20b) in tRNA + NADH + H(+). The enzyme catalyses 5,6-dihydrouridine(20b) in tRNA + NADP(+) = uridine(20b) in tRNA + NADPH + H(+). Its function is as follows. Catalyzes the synthesis of dihydrouridine, a modified base found in the D-loop of most tRNAs. The chain is tRNA-dihydrouridine(20a/20b) synthase [NAD(P)+]-like (DUS4L) from Homo sapiens (Human).